The primary structure comprises 120 residues: Large ribosomal subunit protein uL24 (120 aa).

This sequence belongs to the universal ribosomal protein uL24 family. As to quaternary structure, part of the 50S ribosomal subunit.

One of two assembly initiator proteins, it binds directly to the 5'-end of the 23S rRNA, where it nucleates assembly of the 50S subunit. In terms of biological role, located at the polypeptide exit tunnel on the outside of the subunit. This Methanocaldococcus jannaschii (strain ATCC 43067 / DSM 2661 / JAL-1 / JCM 10045 / NBRC 100440) (Methanococcus jannaschii) protein is Large ribosomal subunit protein uL24.